The primary structure comprises 543 residues: CTP synthase (543 aa).

The tract at residues 1–266 is amidoligase domain; that stretch reads MKTNYIFVTG…DDYICERFSL (266 aa). Serine 14 lines the CTP pocket. Serine 14 contributes to the UTP binding site. ATP is bound by residues 15-20 and aspartate 72; that span reads SLGKGI. Mg(2+) is bound by residues aspartate 72 and glutamate 140. Residues 147-149, 187-192, and lysine 223 each bind CTP; these read DIE and KTKPTQ. UTP is bound by residues 187-192 and lysine 223; that span reads KTKPTQ. 239 to 241 provides a ligand contact to ATP; the sequence is KDV. The Glutamine amidotransferase type-1 domain maps to 291–538; it reads TVGIVGKYID…IKAASEYQKK (248 aa). Residue glycine 352 coordinates L-glutamine. The active-site Nucleophile; for glutamine hydrolysis is cysteine 379. L-glutamine is bound by residues 380 to 383, glutamate 403, and arginine 466; that span reads LGMQ. Residues histidine 511 and glutamate 513 contribute to the active site.

This sequence belongs to the CTP synthase family. In terms of assembly, homotetramer.

The enzyme catalyses UTP + L-glutamine + ATP + H2O = CTP + L-glutamate + ADP + phosphate + 2 H(+). It catalyses the reaction L-glutamine + H2O = L-glutamate + NH4(+). It carries out the reaction UTP + NH4(+) + ATP = CTP + ADP + phosphate + 2 H(+). It functions in the pathway pyrimidine metabolism; CTP biosynthesis via de novo pathway; CTP from UDP: step 2/2. With respect to regulation, allosterically activated by GTP, when glutamine is the substrate; GTP has no effect on the reaction when ammonia is the substrate. The allosteric effector GTP functions by stabilizing the protein conformation that binds the tetrahedral intermediate(s) formed during glutamine hydrolysis. Inhibited by the product CTP, via allosteric rather than competitive inhibition. Its function is as follows. Catalyzes the ATP-dependent amination of UTP to CTP with either L-glutamine or ammonia as the source of nitrogen. Regulates intracellular CTP levels through interactions with the four ribonucleotide triphosphates. In Baumannia cicadellinicola subsp. Homalodisca coagulata, this protein is CTP synthase.